Here is a 298-residue protein sequence, read N- to C-terminus: Acetylglutamate kinase (298 aa).

Residues 69 to 70 (GG), R91, and N191 contribute to the substrate site.

Belongs to the acetylglutamate kinase family. ArgB subfamily.

The protein resides in the cytoplasm. It carries out the reaction N-acetyl-L-glutamate + ATP = N-acetyl-L-glutamyl 5-phosphate + ADP. It functions in the pathway amino-acid biosynthesis; L-arginine biosynthesis; N(2)-acetyl-L-ornithine from L-glutamate: step 2/4. Catalyzes the ATP-dependent phosphorylation of N-acetyl-L-glutamate. The protein is Acetylglutamate kinase of Neisseria gonorrhoeae (strain ATCC 700825 / FA 1090).